A 310-amino-acid chain; its full sequence is Putative RING-H2 finger protein ATL53 (310 aa).

The chain crosses the membrane as a helical span at residues 62 to 82 (VIAIFGIFATAFLLAAYYTLV). The segment at 155 to 197 (CSICLGEFNEDESLRLLPKCNHTFHVVCIDRWLKSHSNCPLCR) adopts an RING-type; atypical zinc-finger fold.

This sequence belongs to the RING-type zinc finger family. ATL subfamily.

The protein localises to the membrane. It catalyses the reaction S-ubiquitinyl-[E2 ubiquitin-conjugating enzyme]-L-cysteine + [acceptor protein]-L-lysine = [E2 ubiquitin-conjugating enzyme]-L-cysteine + N(6)-ubiquitinyl-[acceptor protein]-L-lysine.. It participates in protein modification; protein ubiquitination. The chain is Putative RING-H2 finger protein ATL53 (ATL53) from Arabidopsis thaliana (Mouse-ear cress).